Reading from the N-terminus, the 585-residue chain is Probable glucomannan 4-beta-mannosyltransferase 7 (585 aa).

A helical transmembrane segment spans residues 87–107; sequence VIAPTLQVAVWVCMVMSVMLV. Asp188 is an active-site residue. Substrate is bound by residues Asp247 and Asp249. Residue Asp341 is part of the active site. A run of 4 helical transmembrane segments spans residues 420–440, 443–463, 534–554, and 563–583; these read VVAPMVACVLYNIIVPLSVMI, LFIPIWGVAYIPMALLIITTI, LPEIGFSVFLIFCASYNLIFH, and LYLQGLAFLLLGFNFTGNFAC.

Belongs to the glycosyltransferase 2 family. Plant cellulose synthase-like A subfamily.

Its subcellular location is the golgi apparatus membrane. The catalysed reaction is GDP-mannose + (glucomannan)n = GDP + (glucomannan)n+1.. In terms of biological role, probable mannan synthase which consists of a 4-beta-mannosyltransferase activity on mannan using GDP-mannose. The beta-1,4-mannan product is the backbone for galactomannan synthesis by galactomannan galactosyltransferase. Galactomannan is a noncellulosic polysaccharides of plant cell wall. The sequence is that of Probable glucomannan 4-beta-mannosyltransferase 7 from Oryza sativa subsp. japonica (Rice).